Consider the following 194-residue polypeptide: MAKQKRKVPEVTEKKNKKLKKASAEGPLLGPEAAPSGEGAGSKGEAVLRPGLDAEPELSPEEQRVLERKLKKERKKEERQRLREAGLVAQHPPARRSGAELALDYLCRWAQKHKNWRFQKTRQTWLLLHMYDSDKVPDEHFSTLLAYLEGLQGRARELTVQKAEALMRELDEEGSDPPLPGRAQRIRQVLQLLS.

The interval M1–R83 is disordered. S23 and S59 each carry phosphoserine. Positions E61–R83 are enriched in basic and acidic residues. S97 and S175 each carry phosphoserine.

In terms of tissue distribution, secreted from the instestine, secretion is induced by feeding and cholesterol absorption.

It is found in the secreted. Its function is as follows. Hormone secreted from the intestine in response to cholesterol, where it acts to inhibit cholesterol synthesis in the liver and VLDL secretion,leading to a reduction in circulating cholesterol levels. Acts through binding to its receptor, GPR146. The chain is Protein cholesin from Homo sapiens (Human).